We begin with the raw amino-acid sequence, 344 residues long: Holliday junction branch migration complex subunit RuvB (344 aa).

The interval 1 to 182 (MRIELLNTPV…FGISNRFDYY (182 aa)) is large ATPase domain (RuvB-L). Residues Ile-21, Arg-22, Gly-63, Lys-66, Thr-67, Thr-68, 129-131 (EDF), Arg-172, Tyr-182, and Arg-219 contribute to the ATP site. Thr-67 serves as a coordination point for Mg(2+). A small ATPAse domain (RuvB-S) region spans residues 183-253 (PPELLETILM…TAMKTLDSLE (71 aa)). A head domain (RuvB-H) region spans residues 256 to 344 (EEGLDEMDKK…GTLFDGQEHV (89 aa)). DNA is bound by residues Arg-311 and Arg-316.

The protein belongs to the RuvB family. Homohexamer. Forms an RuvA(8)-RuvB(12)-Holliday junction (HJ) complex. HJ DNA is sandwiched between 2 RuvA tetramers; dsDNA enters through RuvA and exits via RuvB. An RuvB hexamer assembles on each DNA strand where it exits the tetramer. Each RuvB hexamer is contacted by two RuvA subunits (via domain III) on 2 adjacent RuvB subunits; this complex drives branch migration. In the full resolvosome a probable DNA-RuvA(4)-RuvB(12)-RuvC(2) complex forms which resolves the HJ.

The protein resides in the cytoplasm. It catalyses the reaction ATP + H2O = ADP + phosphate + H(+). The RuvA-RuvB-RuvC complex processes Holliday junction (HJ) DNA during genetic recombination and DNA repair, while the RuvA-RuvB complex plays an important role in the rescue of blocked DNA replication forks via replication fork reversal (RFR). RuvA specifically binds to HJ cruciform DNA, conferring on it an open structure. The RuvB hexamer acts as an ATP-dependent pump, pulling dsDNA into and through the RuvAB complex. RuvB forms 2 homohexamers on either side of HJ DNA bound by 1 or 2 RuvA tetramers; 4 subunits per hexamer contact DNA at a time. Coordinated motions by a converter formed by DNA-disengaged RuvB subunits stimulates ATP hydrolysis and nucleotide exchange. Immobilization of the converter enables RuvB to convert the ATP-contained energy into a lever motion, pulling 2 nucleotides of DNA out of the RuvA tetramer per ATP hydrolyzed, thus driving DNA branch migration. The RuvB motors rotate together with the DNA substrate, which together with the progressing nucleotide cycle form the mechanistic basis for DNA recombination by continuous HJ branch migration. Branch migration allows RuvC to scan DNA until it finds its consensus sequence, where it cleaves and resolves cruciform DNA. This is Holliday junction branch migration complex subunit RuvB from Chlorobium luteolum (strain DSM 273 / BCRC 81028 / 2530) (Pelodictyon luteolum).